The primary structure comprises 450 residues: MKRKKHVLHQILSEKRKAERIRGGNMSAKDEFGTTKYIIYAEFEANGVVERPDVVGAIFGQTEGLLGDDLDLRELQKTGRIGRIRVEVHTKAGKTYGTITVPSSLDRVETAILAAALETIDRVGPAEAHIKVLRIEDVRATKRKYIIERAKEILETLMEEEIPETQELTEEVKKAVRAKELIEYGPEKLPAGPHVPFSDSIIVVEGRADVLNLLKHGIKNAIAVEGTSIPETIIKLSKERIVTAFTDGDRGGELILKELLQVADVDYVARAPEGKEVEELTKKEIVKALRSKIPAEQVITEMFHKGKNFYEILKEKERTAPSKEVKPAPKHEPKPQPVEQKPREEKIIRPIQQAKSPEIEKFEKFIERVKKEQTAILLDENMNVIAEIPVRDLLTTISTRDNIYAIVFNGIITQRLIDIVSENNVRYLVGARKANVVRRPVNLKILTFAE.

Residues 199-273 (DSIIVVEGRA…DVDYVARAPE (75 aa)) form the Toprim domain. Mg(2+) contacts are provided by Glu-205, Asp-247, and Asp-249. The segment covering 320–348 (APSKEVKPAPKHEPKPQPVEQKPREEKII) has biased composition (basic and acidic residues). The interval 320–350 (APSKEVKPAPKHEPKPQPVEQKPREEKIIRP) is disordered.

It belongs to the archaeal DnaG primase family. As to quaternary structure, forms a ternary complex with MCM helicase and DNA. Component of the archaeal exosome complex. Requires Mg(2+) as cofactor.

It carries out the reaction ssDNA + n NTP = ssDNA/pppN(pN)n-1 hybrid + (n-1) diphosphate.. RNA polymerase that catalyzes the synthesis of short RNA molecules used as primers for DNA polymerase during DNA replication. Also part of the exosome, which is a complex involved in RNA degradation. Acts as a poly(A)-binding protein that enhances the interaction between heteromeric, adenine-rich transcripts and the exosome. The chain is DNA primase DnaG from Thermococcus gammatolerans (strain DSM 15229 / JCM 11827 / EJ3).